Here is a 135-residue protein sequence, read N- to C-terminus: PTS system sorbose-specific EIIA component (135 aa).

The region spanning 1-131 is the PTS EIIA type-4 domain; the sequence is MVHAIFCAHG…CVVWQQPETV (131 aa). His9 acts as the Tele-phosphohistidine intermediate in catalysis. His9 is subject to Phosphohistidine; by HPr.

It is found in the cytoplasm. Functionally, the phosphoenolpyruvate-dependent sugar phosphotransferase system (PTS), a major carbohydrate active transport system, catalyzes the phosphorylation of incoming sugar substrates concomitant with their translocation across the cell membrane. The enzyme II SorABFM PTS system is involved in L-sorbose transport. This Klebsiella pneumoniae protein is PTS system sorbose-specific EIIA component.